A 514-amino-acid polypeptide reads, in one-letter code: Uronyl 2-sulfotransferase homolog pip (514 aa).

Topologically, residues 1–30 are cytoplasmic; that stretch reads MSLNAERSYKMKLRDVENAFKYRRIPYPKR. A helical; Signal-anchor for type II membrane protein transmembrane segment spans residues 31–50; the sequence is SVELIALLAISCTFFLFMHT. Over 51 to 514 the chain is Lumenal; that stretch reads NKLNSRLKEM…EQQNEYNEDY (464 aa). Over residues 112 to 121 the composition is skewed to basic and acidic residues; sequence HDRRSSEEQL. The interval 112-185 is disordered; sequence HDRRSSEEQL…DEDEVEENDD (74 aa). Residues 127–140 show a composition bias toward basic residues; that stretch reads HGHHHDHHSHHHHM. Over residues 155–170 the composition is skewed to basic and acidic residues; it reads HDKQLAVPDNKHKEDE. Positions 171 to 185 are enriched in acidic residues; it reads VHYEDDEDEVEENDD. An N-linked (GlcNAc...) asparagine glycan is attached at Asn-207. The active site involves His-282. Asn-287, Asn-416, Asn-451, and Asn-467 each carry an N-linked (GlcNAc...) asparagine glycan.

The protein belongs to the sulfotransferase 3 family. As to quaternary structure, interacts with wbl/windbeutel; the interaction is direct and does not require pip to be folded. In terms of tissue distribution, ovary-specific. Specifically expressed in the ventral follicle cells of stage 9-10 egg chambers. Expressed in ovaries. Specifically expressed in the ventral follicle cells of stage 9-10 egg chambers.

It localises to the golgi apparatus membrane. Functionally, sulfotransferase involved in dorsoventral axis patterning in early embryos. Required for the ventral activation of ea/easter by the protease snk in the perivitelline space between the embryonic membrane and the eggshell; activation of ea requires both activation of the ndl-gd-snk protease cascade and sulfation of a vitelline membrane component by pip. Probably acts by mediating the sulfation of some glycoprotein or glycosaminoglycan stably deposited in the vitelline membrane, whose ventrally localized modification leads to spatially restricted activation of the protease cascade resulting in localized activation of the spz Toll receptor ligand by ea. Probably required redundantly with isoform H for dorsoventral axis patterning in embryos. Lacks 2-O-sulfotransferase activity towards completely desulfated N-sulfated (CDSNS) heparin, chondroitin, and chondroitin sulfate A, B (dermatan sulfate), and C. Sulfates several components of the eggshell vitelline membrane, including Vml, Vm26Aa, Vm32E and psd/palisade/Fcp26Aa. In terms of biological role, probably required redundantly with isoform A for dorsoventral axis patterning in embryos. Its function is as follows. Lacks 2-O-sulfotransferase activity towards CDSNS heparin, chondroitin, and chondroitin sulfate A, B (dermatan sulfate), and C. The polypeptide is Uronyl 2-sulfotransferase homolog pip (Drosophila melanogaster (Fruit fly)).